The primary structure comprises 87 residues: MQRNFRKTFVGKVVSDKMDKTITVIVDIYKKDPLYGKRVKQSKKFHVHDENQEAKPGDLVNFMETRPLSKTKRFRLFKILSHAKSAK.

Belongs to the universal ribosomal protein uS17 family. As to quaternary structure, part of the 30S ribosomal subunit.

In terms of biological role, one of the primary rRNA binding proteins, it binds specifically to the 5'-end of 16S ribosomal RNA. This Onion yellows phytoplasma (strain OY-M) protein is Small ribosomal subunit protein uS17.